Consider the following 538-residue polypeptide: Syncytin-2 (538 aa).

The signal sequence occupies residues 1–15; the sequence is MGLLLLVLILTPSLA. Residues 16–478 lie on the Extracellular side of the membrane; that stretch reads AYRHPDFPLL…GWLNWEGTWK (463 aa). The CXXC motif lies at 43-46; that stretch reads CWLC. Intrachain disulfides connect cysteine 43/cysteine 46, cysteine 43/cysteine 439, and cysteine 431/cysteine 438. 8 N-linked (GlcNAc...) asparagine glycosylation sites follow: asparagine 133, asparagine 146, asparagine 177, asparagine 220, asparagine 241, asparagine 247, asparagine 312, and asparagine 332. Residues 354–374 are fusion peptide; sequence FIPLLAGLGILAGTGTGIAGI. The short motif at 414–430 is the CKS-17 element; that stretch reads LQNRRGLDMLTAAQGGI. A CX6CC motif is present at residues 431–439; it reads CLALDEKCC. A glycan (N-linked (GlcNAc...) asparagine) is linked at asparagine 443. A helical transmembrane segment spans residues 479 to 499; the sequence is WFSWVLPLTGPLVSLLLLLLF. Residues 500 to 538 are Cytoplasmic-facing; the sequence is GPCLLNLITQFVSSRLQAIKLQTNLSAGRHPRNIQESPF.

This sequence belongs to the gamma type-C retroviral envelope protein family. HERV class-I FRD env subfamily. The surface and transmembrane proteins form a heterodimer. They are attached by non-covalent interactions or by a labile interchain disulfide bond. Specific enzymatic cleavages in vivo yield the mature SU and TM proteins. Post-translationally, the CXXC motif is highly conserved across a broad range of retroviral envelope proteins. It is thought to participate in the formation of a labile disulfide bond possibly with the CX6CC motif present in the transmembrane protein.

It localises to the virion. It is found in the cell membrane. This endogenous retroviral envelope protein has retained its original fusogenic properties and participates in trophoblast fusion and the formation of a syncytium during placenta morphogenesis. The interaction with MFSD2A is apparently important for this process. Functionally, endogenous envelope proteins may have kept, lost or modified their original function during evolution but this one can still make pseudotypes with MLV, HIV-1 or SIV-1 virions and confer infectivity. Retroviral envelope proteins mediate receptor recognition and membrane fusion during early infection. The surface protein mediates receptor recognition, while the transmembrane protein anchors the envelope heterodimer to the viral membrane through one transmembrane domain. The other hydrophobic domain, called fusion peptide, mediates fusion of the viral membrane with the target cell membrane. This is Syncytin-2 (ERVFRD-1) from Pan troglodytes (Chimpanzee).